Consider the following 235-residue polypeptide: AA9 family lytic polysaccharide monooxygenase D (235 aa).

The N-terminal stretch at 1–18 (MKAFFAVLAVVSAPFVLG) is a signal peptide. Position 19 (His19) interacts with Cu(2+). An O-linked (Man...) serine glycan is attached at Ser29. A disulfide bridge links Cys61 with Cys181. His94 contacts Cu(2+). O2 contacts are provided by His167 and Gln176. Residue Tyr178 participates in Cu(2+) binding. Asn221 carries an N-linked (GlcNAc...) asparagine glycan.

Belongs to the polysaccharide monooxygenase AA9 family. Cu(2+) is required as a cofactor.

It is found in the secreted. It carries out the reaction [(1-&gt;4)-beta-D-glucosyl]n+m + reduced acceptor + O2 = 4-dehydro-beta-D-glucosyl-[(1-&gt;4)-beta-D-glucosyl]n-1 + [(1-&gt;4)-beta-D-glucosyl]m + acceptor + H2O.. Lytic polysaccharide monooxygenase (LPMO) that depolymerizes crystalline and amorphous polysaccharides via the oxidation of scissile alpha- or beta-(1-4)-glycosidic bonds, yielding only C1 oxidation products. Catalysis by LPMOs requires the reduction of the active-site copper from Cu(II) to Cu(I) by a reducing agent and H(2)O(2) or O(2) as a cosubstrate. The polypeptide is AA9 family lytic polysaccharide monooxygenase D (Phanerodontia chrysosporium (White-rot fungus)).